The sequence spans 842 residues: DNA mismatch repair protein MutS (842 aa).

596–603 serves as a coordination point for ATP; sequence GPNMSGKS.

This sequence belongs to the DNA mismatch repair MutS family.

Its function is as follows. This protein is involved in the repair of mismatches in DNA. It is possible that it carries out the mismatch recognition step. This protein has a weak ATPase activity. The protein is DNA mismatch repair protein MutS of Exiguobacterium sp. (strain ATCC BAA-1283 / AT1b).